A 2120-amino-acid chain; its full sequence is Separin (2120 aa).

Ser1126 carries the post-translational modification Phosphoserine. Positions 1299 to 1355 (IKSVPGSEPSKTQGQKRSGRGRQKLASAPLRLNNTSQKGLEGRGLPCTPKPPDRIRQ) are disordered. Phosphoserine is present on residues Ser1396 and Ser1399. Disordered regions lie at residues 1412 to 1485 (AEEP…PEIM) and 1507 to 1561 (GSDG…PRLR). Basic residues-rich tracts occupy residues 1418 to 1432 (RGTA…RKGL) and 1454 to 1463 (RSRRAKKVAS). A compositionally biased stretch (basic and acidic residues) spans 1464-1473 (RHCEERRPQR). Ser1508 is modified (phosphoserine). Basic and acidic residues predominate over residues 1548-1558 (PDKESDKDLGP). The 96-residue stretch at 1945–2040 (PRSTFYVLNP…SAALAVRGNL (96 aa)) folds into the Peptidase C50 domain. The active site involves Cys2029.

Interacts with PTTG1. Interacts with RAD21. Autocleaves. This function, which is not essential for its protease activity, is unknown. Post-translationally, phosphorylated by CDK1. There are 8 Ser/Thr phosphorylation sites. Among them, Ser-1126 phosphorylation is the major site, which conducts to the enzyme inactivation.

It localises to the cytoplasm. Its subcellular location is the nucleus. The enzyme catalyses All bonds known to be hydrolyzed by this endopeptidase have arginine in P1 and an acidic residue in P4. P6 is often occupied by an acidic residue or by a hydroxy-amino-acid residue, the phosphorylation of which enhances cleavage.. Regulated by at least two independent mechanisms. First, it is inactivated via its interaction with securin/PTTG1, which probably covers its active site. The association with PTTG1 is not only inhibitory, since PTTG1 is also required for activating it, the enzyme being inactive in cells in which PTTG1 is absent. PTTG1 degradation at anaphase, liberates it and triggers RAD21 cleavage. Second, phosphorylation at Ser-1126 inactivates it. The complete phosphorylation during mitosis, is removed when cells undergo anaphase. Activation of the enzyme at the metaphase-anaphase transition probably requires the removal of both securin and inhibitory phosphate. In terms of biological role, caspase-like protease, which plays a central role in the chromosome segregation by cleaving the SCC1/RAD21 subunit of the cohesin complex at the onset of anaphase. During most of the cell cycle, it is inactivated by different mechanisms. In Homo sapiens (Human), this protein is Separin (ESPL1).